Consider the following 664-residue polypeptide: Methionine--tRNA ligase (664 aa).

Residues 13-23 (PYTNGPCHIGH) carry the 'HIGH' region motif. C144, C147, C156, and C160 together coordinate Zn(2+). Residues 327–331 (KFSKS) carry the 'KMSKS' region motif. K330 contributes to the ATP binding site. A tRNA-binding domain is found at 566–664 (EFGNLDIRIA…RPVKPGTKIR (99 aa)).

It belongs to the class-I aminoacyl-tRNA synthetase family. MetG type 1 subfamily. In terms of assembly, homodimer. Zn(2+) is required as a cofactor.

It localises to the cytoplasm. The catalysed reaction is tRNA(Met) + L-methionine + ATP = L-methionyl-tRNA(Met) + AMP + diphosphate. In terms of biological role, is required not only for elongation of protein synthesis but also for the initiation of all mRNA translation through initiator tRNA(fMet) aminoacylation. This chain is Methionine--tRNA ligase, found in Methanoculleus marisnigri (strain ATCC 35101 / DSM 1498 / JR1).